Consider the following 233-residue polypeptide: Transcriptional regulatory protein WalR (233 aa).

The region spanning 4–117 (KVVVVDDEKP…ELIARVKANL (114 aa)) is the Response regulatory domain. D53 is subject to 4-aspartylphosphate. Residues 132-231 (TNEITIKDIV…RRGVGYFLQQ (100 aa)) constitute a DNA-binding region (ompR/PhoB-type).

In terms of processing, phosphorylated by WalK.

Its subcellular location is the cytoplasm. Its function is as follows. Member of the two-component regulatory system WalK/WalR. In Staphylococcus haemolyticus (strain JCSC1435), this protein is Transcriptional regulatory protein WalR (walR).